A 141-amino-acid chain; its full sequence is Large ribosomal subunit protein uL16 (141 aa).

Over residues 1–19 (MLMPKKTKYRKQQKGRNRG) the composition is skewed to basic residues. Residues 1 to 22 (MLMPKKTKYRKQQKGRNRGKAY) are disordered.

This sequence belongs to the universal ribosomal protein uL16 family. In terms of assembly, part of the 50S ribosomal subunit.

Its function is as follows. Binds 23S rRNA and is also seen to make contacts with the A and possibly P site tRNAs. This chain is Large ribosomal subunit protein uL16, found in Nitratiruptor sp. (strain SB155-2).